The primary structure comprises 417 residues: Gap junction alpha-3 protein (417 aa).

Residues 2 to 15 lie within the membrane without spanning it; the sequence is GDWSFLGRLLENAQ. At 16–19 the chain is on the cytoplasmic side; it reads EHST. The helical transmembrane segment at 20–40 threads the bilayer; that stretch reads VIGKVWLTVLFIFRILVLGAA. The Extracellular portion of the chain corresponds to 41–71; that stretch reads AEEVWGDEQSDFTCNTQQPGCENVCYDRAFP. 3 disulfides stabilise this stretch: cysteine 54–cysteine 198, cysteine 61–cysteine 192, and cysteine 65–cysteine 187. A helical membrane pass occupies residues 72–92; sequence ISHIRFWALQIIFVSTPTLIY. Topologically, residues 93-158 are cytoplasmic; the sequence is LGHVLHIVRM…GALLRTYVFN (66 aa). Residues 110-128 show a composition bias toward basic and acidic residues; it reads EEELLRRDNPQHGRGREPM. A disordered region spans residues 110–141; the sequence is EEELLRRDNPQHGRGREPMRTGSPRDPPLRDD. The helical transmembrane segment at 159–179 threads the bilayer; sequence IIFKTLFEVGFIAGQYFLYGF. Residues 180-207 lie on the Extracellular side of the membrane; it reads QLQPLYRCDRWPCPNTVDCFISRPTEKT. Residues 208–228 form a helical membrane-spanning segment; sequence IFVIFMLAVACASLVLNMLEI. The Cytoplasmic portion of the chain corresponds to 229-417; that stretch reads YHLGWKKLKQ…GRARPGDLAI (189 aa). Disordered regions lie at residues 247–267 and 334–417; these read DASE…SSGP and RQVA…DLAI. Positions 342-353 are enriched in low complexity; that stretch reads PASKPSSAASSP.

It belongs to the connexin family. Alpha-type (group II) subfamily. As to quaternary structure, a hemichannel or connexon is composed of a hexamer of connexins. A functional gap junction is formed by the apposition of two hemichannels. Forms heteromeric channels with GJA8.

It is found in the cell membrane. Its subcellular location is the cell junction. The protein localises to the gap junction. Its function is as follows. Structural component of lens fiber gap junctions. Gap junctions are dodecameric channels that connect the cytoplasm of adjoining cells. They are formed by the docking of two hexameric hemichannels, one from each cell membrane. Small molecules and ions diffuse from one cell to a neighboring cell via the central pore. The polypeptide is Gap junction alpha-3 protein (Gja3) (Mus musculus (Mouse)).